The following is a 411-amino-acid chain: C6 finger domain transcription factor hasA (411 aa).

Over residues 1-17 (MTSTLPYLTSPPATHPS) the composition is skewed to polar residues. Residues 1–21 (MTSTLPYLTSPPATHPSNSDH) are disordered. The zn(2)-C6 fungal-type DNA-binding region spans 28–54 (CDSCHQCKVKCSGGSPCFRCTSKGLNC).

The protein resides in the nucleus. Functionally, transcription factor; part of the gene cluster that mediates the biosynthesis of hexadehydro-astechrome (HAS), a tryptophan-derived iron(III)-complex that acts as a virulence factor in infected mice. Positively regulates the expression of the HAS biosynthetic genes. The protein is C6 finger domain transcription factor hasA of Aspergillus fumigatus (strain CBS 144.89 / FGSC A1163 / CEA10) (Neosartorya fumigata).